Here is a 463-residue protein sequence, read N- to C-terminus: L-seryl-tRNA(Sec) selenium transferase (463 aa).

K295 is subject to N6-(pyridoxal phosphate)lysine.

Belongs to the SelA family. In terms of assembly, homodecamer; pentamer of dimers. Binds only one seryl-tRNA(Sec) per dimer. Pyridoxal 5'-phosphate serves as cofactor.

The protein resides in the cytoplasm. The enzyme catalyses L-seryl-tRNA(Sec) + selenophosphate + H(+) = L-selenocysteinyl-tRNA(Sec) + phosphate. It participates in aminoacyl-tRNA biosynthesis; selenocysteinyl-tRNA(Sec) biosynthesis; selenocysteinyl-tRNA(Sec) from L-seryl-tRNA(Sec) (bacterial route): step 1/1. Converts seryl-tRNA(Sec) to selenocysteinyl-tRNA(Sec) required for selenoprotein biosynthesis. This chain is L-seryl-tRNA(Sec) selenium transferase, found in Salmonella paratyphi A (strain AKU_12601).